Here is an 87-residue protein sequence, read N- to C-terminus: MKTKLNELLEFPTPFTYKVMGQALPELVDQVVEVVQRHAPGDYSPSVKPSSKGNYHSVSITINATHIEQVETLYEELGNIDIVRMVL.

This sequence belongs to the UPF0250 family.

This Klebsiella pneumoniae subsp. pneumoniae (strain ATCC 700721 / MGH 78578) protein is UPF0250 protein KPN78578_06520.